Consider the following 229-residue polypeptide: Potassium/proton antiporter CemA (229 aa).

The next 3 membrane-spanning stretches (helical) occupy residues 6–26 (AFIP…ISLC), 107–127 (ILHF…SFWG), and 189–209 (ILSG…KYWI).

This sequence belongs to the CemA family.

The protein resides in the plastid. It localises to the chloroplast inner membrane. It carries out the reaction K(+)(in) + H(+)(out) = K(+)(out) + H(+)(in). Contributes to K(+)/H(+) antiport activity by supporting proton efflux to control proton extrusion and homeostasis in chloroplasts in a light-dependent manner to modulate photosynthesis. Prevents excessive induction of non-photochemical quenching (NPQ) under continuous-light conditions. Indirectly promotes efficient inorganic carbon uptake into chloroplasts. The protein is Potassium/proton antiporter CemA of Arabis hirsuta (Hairy rock-cress).